A 349-amino-acid polypeptide reads, in one-letter code: Hyaluronidase Tab y 2.0101 (349 aa).

The N-terminal stretch at 1–25 (MKLHQGLVCLSVLILLPTCILGDRK) is a signal peptide. Disulfide bonds link Cys-37–Cys-328 and Cys-205–Cys-216. 4 N-linked (GlcNAc...) asparagine glycosylation sites follow: Asn-41, Asn-81, Asn-99, and Asn-119. Glu-129 functions as the Proton donor in the catalytic mechanism. Asn-147 carries N-linked (GlcNAc...) asparagine glycosylation. N-linked (GlcNAc...) asparagine glycans are attached at residues Asn-251 and Asn-297.

The protein belongs to the glycosyl hydrolase 56 family. Expressed in salivary glands.

It localises to the secreted. It carries out the reaction Random hydrolysis of (1-&gt;4)-linkages between N-acetyl-beta-D-glucosamine and D-glucuronate residues in hyaluronate.. Hydrolyzes high molecular weight hyaluronic acid to produce small oligosaccharides. The protein is Hyaluronidase Tab y 2.0101 of Tabanus yao (Horsefly).